The sequence spans 247 residues: MNVLSCSMNTLRGLYDISGVEVGQHFYWQIGGFQVHAQVLITSWVVIAILLGSAFIAVRNPQTVPTATQNFFEYVLEFIRDVSKTQIGEEYGPWVPFIGTLFLFIFVSNWSGALLPWKIIELPHGELAAPTNDINTTVALALLTSIAYFYAGLSKKGLGYFSKYIQPTPILLPINILEDFTKPLSLSFRLFGNILADELVVVVLVSLVPLVVPIPVMFLGLFTSGIQALIFATLAAAYIGESMEGHH.

The next 5 membrane-spanning stretches (helical) occupy residues 38 to 58, 95 to 115, 134 to 154, 199 to 219, and 220 to 240; these read QVLI…FIAV, VPFI…GALL, INTT…AGLS, LVVV…VMFL, and GLFT…AYIG.

Belongs to the ATPase A chain family. In terms of assembly, F-type ATPases have 2 components, CF(1) - the catalytic core - and CF(0) - the membrane proton channel. CF(1) has five subunits: alpha(3), beta(3), gamma(1), delta(1), epsilon(1). CF(0) has four main subunits: a, b, b' and c.

It localises to the plastid. The protein localises to the chloroplast thylakoid membrane. Its function is as follows. Key component of the proton channel; it plays a direct role in the translocation of protons across the membrane. The chain is ATP synthase subunit a, chloroplastic from Citrus sinensis (Sweet orange).